The chain runs to 123 residues: T-complex protein 1 subunit alpha (123 aa).

Residue Gly68 participates in ADP binding.

It belongs to the TCP-1 chaperonin family. As to quaternary structure, component of the chaperonin-containing T-complex (TRiC), a hexadecamer composed of two identical back-to-back stacked rings enclosing a protein folding chamber. Each ring is made up of eight different subunits: TCP1/CCT1, CCT2, CCT3, CCT4, CCT5, CCT6A/CCT6, CCT7, CCT8. Interacts with PACRG. Interacts with GBA1. Interacts with DLEC1.

The protein localises to the cytoplasm. It is found in the cytosol. The protein resides in the cytoskeleton. It localises to the microtubule organizing center. Its subcellular location is the centrosome. The enzyme catalyses ATP + H2O = ADP + phosphate + H(+). In terms of biological role, component of the chaperonin-containing T-complex (TRiC), a molecular chaperone complex that assists the folding of actin, tubulin and other proteins upon ATP hydrolysis. The TRiC complex mediates the folding of WRAP53/TCAB1, thereby regulating telomere maintenance. As part of the TRiC complex may play a role in the assembly of BBSome, a complex involved in ciliogenesis regulating transports vesicles to the cilia. The sequence is that of T-complex protein 1 subunit alpha from Mesocricetus auratus (Golden hamster).